Reading from the N-terminus, the 511-residue chain is Maturase K (511 aa).

It belongs to the intron maturase 2 family. MatK subfamily.

It is found in the plastid. Its subcellular location is the chloroplast. In terms of biological role, usually encoded in the trnK tRNA gene intron. Probably assists in splicing its own and other chloroplast group II introns. In Hordeum secalinum (Meadow barley), this protein is Maturase K.